The primary structure comprises 706 residues: DNA ligase (706 aa).

Residues 1–20 form a disordered region; sequence MSATAGTADESGVASAAASA. NAD(+) is bound by residues 50–54, 99–100, and Glu-128; these read DAEYD and SL. Residue Lys-130 is the N6-AMP-lysine intermediate of the active site. Arg-151, Glu-188, Lys-304, and Lys-328 together coordinate NAD(+). Residues Cys-422, Cys-425, Cys-440, and Cys-446 each contribute to the Zn(2+) site. One can recognise a BRCT domain in the interval 604–694; the sequence is EGPRPLDGVT…VDAASKLAVP (91 aa).

The protein belongs to the NAD-dependent DNA ligase family. LigA subfamily. Requires Mg(2+) as cofactor. It depends on Mn(2+) as a cofactor.

It catalyses the reaction NAD(+) + (deoxyribonucleotide)n-3'-hydroxyl + 5'-phospho-(deoxyribonucleotide)m = (deoxyribonucleotide)n+m + AMP + beta-nicotinamide D-nucleotide.. DNA ligase that catalyzes the formation of phosphodiester linkages between 5'-phosphoryl and 3'-hydroxyl groups in double-stranded DNA using NAD as a coenzyme and as the energy source for the reaction. It is essential for DNA replication and repair of damaged DNA. This Frankia casuarinae (strain DSM 45818 / CECT 9043 / HFP020203 / CcI3) protein is DNA ligase.